We begin with the raw amino-acid sequence, 621 residues long: Bifunctional protein GlmU (621 aa).

The pyrophosphorylase stretch occupies residues 1-229 (MAERDLAVAI…AREIVGINDR (229 aa)). UDP-N-acetyl-alpha-D-glucosamine-binding positions include 11 to 14 (LAAG), lysine 25, glutamine 76, and 81 to 82 (GT). Residue aspartate 106 participates in Mg(2+) binding. Residues glycine 143, glutamate 158, asparagine 173, and asparagine 227 each contribute to the UDP-N-acetyl-alpha-D-glucosamine site. Asparagine 227 is a binding site for Mg(2+). A linker region spans residues 230–250 (RQLAQAYQILQDRLKEAWMEA). The tract at residues 251–621 (GVTFVDPDSV…TGVGIPSCPP (371 aa)) is N-acetyltransferase. The UDP-N-acetyl-alpha-D-glucosamine site is built by arginine 332 and lysine 350. Residue histidine 362 is the Proton acceptor of the active site. UDP-N-acetyl-alpha-D-glucosamine contacts are provided by tyrosine 365 and asparagine 376. Residues alanine 379, 385 to 386 (NY), alanine 422, and arginine 441 each bind acetyl-CoA. Residues 601-621 (ATPPSPQRADGTGVGIPSCPP) are disordered.

In the N-terminal section; belongs to the N-acetylglucosamine-1-phosphate uridyltransferase family. The protein in the C-terminal section; belongs to the transferase hexapeptide repeat family. In terms of assembly, homotrimer. Mg(2+) is required as a cofactor.

It is found in the cytoplasm. The enzyme catalyses alpha-D-glucosamine 1-phosphate + acetyl-CoA = N-acetyl-alpha-D-glucosamine 1-phosphate + CoA + H(+). It catalyses the reaction N-acetyl-alpha-D-glucosamine 1-phosphate + UTP + H(+) = UDP-N-acetyl-alpha-D-glucosamine + diphosphate. The protein operates within nucleotide-sugar biosynthesis; UDP-N-acetyl-alpha-D-glucosamine biosynthesis; N-acetyl-alpha-D-glucosamine 1-phosphate from alpha-D-glucosamine 6-phosphate (route II): step 2/2. It participates in nucleotide-sugar biosynthesis; UDP-N-acetyl-alpha-D-glucosamine biosynthesis; UDP-N-acetyl-alpha-D-glucosamine from N-acetyl-alpha-D-glucosamine 1-phosphate: step 1/1. Its pathway is bacterial outer membrane biogenesis; LPS lipid A biosynthesis. Catalyzes the last two sequential reactions in the de novo biosynthetic pathway for UDP-N-acetylglucosamine (UDP-GlcNAc). The C-terminal domain catalyzes the transfer of acetyl group from acetyl coenzyme A to glucosamine-1-phosphate (GlcN-1-P) to produce N-acetylglucosamine-1-phosphate (GlcNAc-1-P), which is converted into UDP-GlcNAc by the transfer of uridine 5-monophosphate (from uridine 5-triphosphate), a reaction catalyzed by the N-terminal domain. The chain is Bifunctional protein GlmU from Synechococcus sp. (strain JA-3-3Ab) (Cyanobacteria bacterium Yellowstone A-Prime).